We begin with the raw amino-acid sequence, 239 residues long: 1-(5-phosphoribosyl)-5-[(5-phosphoribosylamino)methylideneamino] imidazole-4-carboxamide isomerase (239 aa).

D8 acts as the Proton acceptor in catalysis. The active-site Proton donor is the D129.

This sequence belongs to the HisA/HisF family.

It is found in the cytoplasm. The catalysed reaction is 1-(5-phospho-beta-D-ribosyl)-5-[(5-phospho-beta-D-ribosylamino)methylideneamino]imidazole-4-carboxamide = 5-[(5-phospho-1-deoxy-D-ribulos-1-ylimino)methylamino]-1-(5-phospho-beta-D-ribosyl)imidazole-4-carboxamide. Its pathway is amino-acid biosynthesis; L-histidine biosynthesis; L-histidine from 5-phospho-alpha-D-ribose 1-diphosphate: step 4/9. This chain is 1-(5-phosphoribosyl)-5-[(5-phosphoribosylamino)methylideneamino] imidazole-4-carboxamide isomerase, found in Roseobacter denitrificans (strain ATCC 33942 / OCh 114) (Erythrobacter sp. (strain OCh 114)).